The following is a 252-amino-acid chain: 5'-nucleotidase SurE (252 aa).

A divalent metal cation is bound by residues aspartate 8, aspartate 9, serine 39, and asparagine 91.

It belongs to the SurE nucleotidase family. A divalent metal cation serves as cofactor.

The protein localises to the cytoplasm. The enzyme catalyses a ribonucleoside 5'-phosphate + H2O = a ribonucleoside + phosphate. Nucleotidase that shows phosphatase activity on nucleoside 5'-monophosphates. This Bordetella bronchiseptica (strain ATCC BAA-588 / NCTC 13252 / RB50) (Alcaligenes bronchisepticus) protein is 5'-nucleotidase SurE.